The primary structure comprises 1153 residues: Cingulin (1153 aa).

The segment at 1-342 (MAEPRGPVDH…LVMTTGSAKV (342 aa)) is head. Residues 17–37 (ITEPAGDAQMRTGRRPAKDAR) form a disordered region. Positions 38 to 52 (ANTYGVAVRVQGIAG) match the ZIM motif. Residues 44-57 (AVRVQGIAGQPFVV) are interaction with TJP1/ZO1. Phosphoserine occurs at positions 86, 126, 128, 131, 146, 205, 208, and 324. 2 disordered regions span residues 131–151 (SLLGPAPLGPGHRSTSLLELG) and 177–253 (DRHQ…SRAR). A compositionally biased stretch (basic and acidic residues) spans 207–220 (DSRHLRDPPEDRRS). Residues 343-1110 (LAGQGELAQK…ALEKDSWRKA (768 aa)) are a coiled coil. Position 562 is an N6-acetyllysine (K562). Disordered stretches follow at residues 755–796 (AQRG…QKRL), 823–861 (QSQLEDYKEKSRREVADAQRQAKEWASEAEKSSGGLSRL), and 1110–1131 (AARSAAESSLQQEGLSSDEEFD). Basic and acidic residues-rich tracts occupy residues 772-796 (ALEEEGKQREALRRGKAELEEQKRL) and 827-853 (EDYKEKSRREVADAQRQAKEWASEAEK). The tract at residues 1111–1153 (ARSAAESSLQQEGLSSDEEFDGVYNPNSIASLLTESGLQTSSC) is tail. Polar residues predominate over residues 1115–1124 (AESSLQQEGL). Phosphoserine occurs at positions 1125 and 1126.

This sequence belongs to the cingulin family. In terms of assembly, homodimer. Interacts with TJP1/ZO1 and SPEF1.

It localises to the cell junction. Its subcellular location is the tight junction. Functionally, probably plays a role in the formation and regulation of the tight junction (TJ) paracellular permeability barrier. The protein is Cingulin of Sorex araneus (Eurasian common shrew).